A 267-amino-acid chain; its full sequence is Regulatory protein RecX (267 aa).

Belongs to the RecX family.

It localises to the cytoplasm. Modulates RecA activity. This Leuconostoc mesenteroides subsp. mesenteroides (strain ATCC 8293 / DSM 20343 / BCRC 11652 / CCM 1803 / JCM 6124 / NCDO 523 / NBRC 100496 / NCIMB 8023 / NCTC 12954 / NRRL B-1118 / 37Y) protein is Regulatory protein RecX.